We begin with the raw amino-acid sequence, 157 residues long: CASP-like protein 1 (157 aa).

Topologically, residues 1 to 13 (MKTEARDGGSEWR) are cytoplasmic. The chain crosses the membrane as a helical span at residues 14 to 34 (WVAIFELFLRLAAIVSTSVAV). The Extracellular portion of the chain corresponds to 35-40 (YAAMGK). A helical transmembrane segment spans residues 41-61 (IFVVAVNGVACFYLLMSLPVS). Topologically, residues 62-82 (IFNIMRPHAYPANRVFLNIMD) are cytoplasmic. Residues 83 to 103 (MVMVALVTAGALAAGIVYLVE) form a helical membrane-spanning segment. The Extracellular portion of the chain corresponds to 104–121 (KAGNARASWVSVWSQFDS). Residues 122–142 (SSCFAVLALILHVLLSGVILY) form a helical membrane-spanning segment. The Cytoplasmic segment spans residues 143-157 (KQALNIKFKKLDSVD).

It belongs to the Casparian strip membrane proteins (CASP) family. In terms of assembly, homodimer and heterodimers.

It is found in the cell membrane. The chain is CASP-like protein 1 from Picea sitchensis (Sitka spruce).